The sequence spans 88 residues: HssA/B-like protein 64 (88 aa).

Over residues 1-24 the composition is skewed to low complexity; sequence MTLFSSISSMSSSMTSSKSSFASF. Disordered regions lie at residues 1–25 and 45–88; these read MTLF…ASFG and GVSS…GNSC. Over residues 56-66 the composition is skewed to gly residues; the sequence is AKSGGDCGGKG.

It belongs to the hssA/B family.

This is HssA/B-like protein 64 (hssl64) from Dictyostelium discoideum (Social amoeba).